Reading from the N-terminus, the 179-residue chain is Low molecular weight phosphotyrosine protein phosphatase (179 aa).

Cys-15 functions as the Nucleophile in the catalytic mechanism. The active site involves Arg-21. Catalysis depends on Asp-148, which acts as the Proton donor.

The protein belongs to the low molecular weight phosphotyrosine protein phosphatase family.

It is found in the cytoplasm. The enzyme catalyses O-phospho-L-tyrosyl-[protein] + H2O = L-tyrosyl-[protein] + phosphate. It carries out the reaction a phosphate monoester + H2O = an alcohol + phosphate. Functionally, acts on tyrosine phosphorylated proteins, low-MW aryl phosphates and natural and synthetic acyl phosphates. In Dictyostelium discoideum (Social amoeba), this protein is Low molecular weight phosphotyrosine protein phosphatase (acp1).